A 411-amino-acid polypeptide reads, in one-letter code: Citrate synthase (411 aa).

Catalysis depends on residues His304 and Asp363.

Belongs to the citrate synthase family.

The catalysed reaction is oxaloacetate + acetyl-CoA + H2O = citrate + CoA + H(+). It participates in carbohydrate metabolism; tricarboxylic acid cycle; isocitrate from oxaloacetate: step 1/2. The chain is Citrate synthase (gltA) from Rickettsia conorii subsp. caspia (strain A-167) (Astrakhan rickettsia).